The primary structure comprises 476 residues: Probable isoprenylcysteine alpha-carbonyl methylesterase ICMEL1 (476 aa).

Positions 92–104 (NCLSAFSDDTNGT) are enriched in polar residues. The interval 92 to 116 (NCLSAFSDDTNGTADGGNNSGDRQT) is disordered. 2 consecutive transmembrane segments (helical) span residues 153-173 (FMALGCYAFLLMPGFIQVGYY) and 208-228 (VVAFVTGGAWIIGYKAWGSLL). Residues 214-216 (GGA) and 285-287 (QSA) each bind substrate. Active-site residues include Ser-286, Asp-388, and His-420.

This sequence belongs to the AB hydrolase superfamily. Isoprenylcysteine methylesterase family. Expressed in roots, rosette and cauline leaves, stems, flowers and siliques.

The protein resides in the endoplasmic reticulum membrane. It is found in the golgi apparatus membrane. It catalyses the reaction [protein]-C-terminal S-[(2E,6E)-farnesyl]-L-cysteine methyl ester + H2O = [protein]-C-terminal S-[(2E,6E)-farnesyl]-L-cysteine + methanol + H(+). In terms of biological role, catalyzes the demethylation of isoprenylcysteine methylesters. May be involved in the regulation of ABA signaling. This is Probable isoprenylcysteine alpha-carbonyl methylesterase ICMEL1 from Arabidopsis thaliana (Mouse-ear cress).